We begin with the raw amino-acid sequence, 496 residues long: MFS transporter cpaT (496 aa).

Residues 1-45 form a disordered region; it reads MGHQEEPPRICKTPSGHEQGEGPAEKTSKPSTEEVGWDGPTDPAR. Over residues 18–32 the composition is skewed to basic and acidic residues; it reads EQGEGPAEKTSKPST. The N-linked (GlcNAc...) asparagine glycan is linked to N48. Residues 58-78 form a helical membrane-spanning segment; it reads MGIISYLTFLTPLTSSIVAPA. An N-linked (GlcNAc...) asparagine glycan is attached at N90. The next 5 membrane-spanning stretches (helical) occupy residues 93–113, 130–150, 154–174, 180–200, and 212–232; these read LASF…LFLA, FIFT…ALLV, FAGI…ADMF, GVAM…GPIA, and WVFW…LFVL. Residue N252 is glycosylated (N-linked (GlcNAc...) asparagine). The next 6 helical transmembrane spans lie at 288–308, 325–345, 367–387, 395–415, 427–449, and 463–483; these read VALF…LFTT, GLVY…FGAL, LPPL…YGWS, IMPI…LLPI, AASA…PLAG, and SLLG…YFYG.

The protein belongs to the major facilitator superfamily.

It localises to the membrane. MFS transporter; part of the gene cluster that mediates the biosynthesis of the fungal neurotoxin cyclopiazonic acid (CPA), a nanomolar inhibitor of Ca(2+)-ATPase with a unique pentacyclic indole tetramic acid scaffold. The chain is MFS transporter cpaT from Aspergillus oryzae (Yellow koji mold).